We begin with the raw amino-acid sequence, 1711 residues long: MKAVYREMCPNCWGRISDERLVMRNPCEECLDEPVHADSYFQLVSAVRNALKLRGTLKEWEKIYQLENQTREIEEFFKKATGFTFWSAQRTWVKRLLKGRSFSIIAPTGMGKSTFGAFMAVWHALKGKKSYIVVPTTPLVIQTVRKIEGIMENANADVRLAYYHGNLRKKEKEEMLERIKNEDYDILVTSAQWLARNYEEVLKGRHFDFIFVDDVDAFLKASKNIDRSLYLLGFTDEIIQKAWEIIRLKKQMSRYLNGNSEDRNEKLNGLNREIEKLQREIEKFKRKNKIGIMIIASATGSARGDRIKLYRELLGFEVGSGRSALRNVVDSYLKPTKDIKEHVEELLTRLGKGGLIFVPVDQGLGYAEELANYLSEKGFKIELVSSKNKKALEKFENGEADYLIGSATYYGSLVRGIDLPHLIRYAVFTGVPKFRFSIDLERPTIYRALGLLSEIMDFLSEEDRRQAEKLHARLRRLIRNIPQFELLKIEEALAEGLPIENEFHNHVLGVFRELVEFLRRVLRDEEVLRKLAEDPFISLVKEEGKWYIEIPDVRTYIQATGRTSRLFAGGITKGLSVLIVDNEKVFNGLVRQMRWRFQEFKMVPFEELDLDEILRQIDEDREKVRLVMEGKISAKVKDLVRSALMIVESPNKARTIANFFGQPSKTRIGDLVAYEISVGDRMLTILASGGHMFDLVTNEGYHGVLIQNEGDMLKFIPVYDTLKRCRDCGHQFVDWEKKGVCPRCGSTNVRDALENVIAMREIAQEVDEILIATDPDTEGEKIAWDIRNVLAPYTPNIKRIEFHEVTRPAIMKAIQEARDVNENRVNAQIVRRIEDRWIGFELSQELQRVFESYNLSAGRVQTPVLGWIIERYKEFTESEVYFLGLTLENGLQVTIELGKDGKDVEPPEYVTVEEVQLEERELNPAPPYTTDAMLKDASTFLKLSAPETMRLAQDLFEAGLCVTPDTLVSLADGRIMEIKDAVEKSEGNLLSVNGLKPKEAKALKFWEIDWNGPLKVIKLKNGHEIKATPDHGLLVMREGKLGWVSAKNVREGDYVAFAYNTGHRGRDEYTLLKLMIKLGITDVMVELDEEYFNEKVAPIVRERISTSTKYKYLRRRVLPLYLLQEWGLDDYEAHVKSLYRQRAGSKPIPNFKLDGRFWYVFGLVLGDGTLRDSKVLISQTPLKDVKSVLEDVFPFLRVFETTNQVGFSNSIIAEVFRRLGARKGKLHPLVFGLREEYINAMIAGYFDTDGTFSILNDRKGPNFRGILTSKRGDVLRMLSVYLYQIGIMNYLRRDERTGVWDLIISNRSLEKFREKIYPYLRIRRAQFDEAYSVYRASRRAFEGDLLPVAPVFGKLKFKNGTKNRILKETGIDVWNWLKRPEGEIPRDKLSKVLEYAEESPEKEFLKSLVEAGVTWVKVKGVEEELYTGKLYDFTTTTENFLSNGAVSHNCTYHRTDSTHVSNTGIEVAKEYITQELGEKYFKPRPWGEEGAHEAIRPTRPIDTGRLMQLIRDGIIQLPRNLTRNHYRLYDMIFRRFMTSQMTPAKILYEKAVINAGVGKAELEGYVEIIEDGWTRLRSPPLRELPKLEKGMKLKVVEAKKWKAPKVSLYTQGDIIALMKERKIGRPSTYAKIVETLMRRGYVVETKGRKKLLPTEKGIKVYHYLVSKYRDLVSEERTRELEEIMDRIEEGIEDYIKVLGELYSEIQRYVSG.

Residues 1 to 39 (MKAVYREMCPNCWGRISDERLVMRNPCEECLDEPVHADS) form an RG N-terminal-type zinc finger. Zn(2+)-binding residues include cysteine 9, cysteine 12, cysteine 27, and cysteine 30. Residues glutamine 89 and 106–113 (APTGMGKS) each bind ATP. Residues 93–256 (VKRLLKGRSF…RLKKQMSRYL (164 aa)) form the Helicase ATP-binding domain. The short motif at 213–216 (DDVD) is the DEAD box element. Positions 638-1711 (DLVRSALMIV…YSEIQRYVSG (1074 aa)) are topoisomerase I. The Toprim domain maps to 642-805 (SALMIVESPN…NIKRIEFHEV (164 aa)). Glutamate 648 contributes to the Mg(2+) binding site. Residues 722 to 751 (LKRCRDCGHQFVDWEKKGVCPRCGSTNVRD) form an RG C-terminal-type zinc finger. Zn(2+) is bound by residues cysteine 725, cysteine 728, cysteine 741, and cysteine 744. Aspartate 774 is a binding site for Mg(2+). Residues 821–1709 (NENRVNAQIV…ELYSEIQRYV (889 aa)) form the Topo IA-type catalytic domain. The region spanning 1160–1287 (VFGLVLGDGT…LSVYLYQIGI (128 aa)) is the DOD-type homing endonuclease domain. The O-(5'-phospho-DNA)-tyrosine intermediate role is filled by tyrosine 1452.

This sequence in the N-terminal section; belongs to the DEAD box helicase family. DDVD subfamily. The protein in the C-terminal section; belongs to the type IA topoisomerase family. Monomer. Zn(2+) is required as a cofactor. Mg(2+) serves as cofactor. In terms of processing, this protein undergoes a protein self splicing that involves a post-translational excision of the intervening region (intein) followed by peptide ligation.

It localises to the cytoplasm. It carries out the reaction ATP + H2O = ADP + phosphate + H(+). Functionally, modifies the topological state of DNA by introducing positive supercoils in an ATP-dependent process, increasing the linking number in steps of +1. Binds to single-stranded DNA, transiently cleaves and then rejoins the ends, introducing a positive supercoil in the process. The scissile phosphodiester is attacked by the catalytic tyrosine of the enzyme, resulting in the formation of a DNA-(5'-phosphotyrosyl)-enzyme intermediate. Probably involved in rewinding DNA strands in regions of the chromosome that have opened up to allow replication, transcription, DNA repair and/or for DNA protection. The chain is Reverse gyrase from Thermococcus kodakarensis (strain ATCC BAA-918 / JCM 12380 / KOD1) (Pyrococcus kodakaraensis (strain KOD1)).